A 183-amino-acid chain; its full sequence is Caltractin ICL1f (183 aa).

The segment covering 1-19 (MARRGQQPPQQQQQAQPAQ) has biased composition (low complexity). Residues 1–30 (MARRGQQPPQQQQQAQPAQKNQAGKFNPAE) are disordered. EF-hand domains lie at 39–74 (EEVL…LGFE), 75–110 (AKNQ…RISE), 112–147 (DSKA…LGET), and 148–183 (MDDS…KTFA). Ca(2+) is bound by residues aspartate 52, aspartate 54, threonine 56, serine 58, glutamate 63, aspartate 88, aspartate 90, serine 92, glutamine 94, and glutamate 99.

The protein belongs to the centrin family. As to quaternary structure, monomer.

It localises to the cytoplasm. It is found in the cytoskeleton. Its function is as follows. Plays a fundamental role in microtubule organizing center structure and function. Component of the infraciliary lattice (ICL) and the ciliary basal bodies. The sequence is that of Caltractin ICL1f (Icl1f) from Paramecium tetraurelia.